The sequence spans 196 residues: Imidazoleglycerol-phosphate dehydratase (196 aa).

This sequence belongs to the imidazoleglycerol-phosphate dehydratase family.

The protein resides in the cytoplasm. It carries out the reaction D-erythro-1-(imidazol-4-yl)glycerol 3-phosphate = 3-(imidazol-4-yl)-2-oxopropyl phosphate + H2O. It participates in amino-acid biosynthesis; L-histidine biosynthesis; L-histidine from 5-phospho-alpha-D-ribose 1-diphosphate: step 6/9. The sequence is that of Imidazoleglycerol-phosphate dehydratase from Caulobacter sp. (strain K31).